The primary structure comprises 465 residues: Intraflagellar transport protein 54 (465 aa).

2 disordered regions span residues Val-119–Met-301 and Leu-347–Pro-366. Positions Leu-144–Gln-207 form a coiled coil. Positions Ala-146–Lys-198 are enriched in basic and acidic residues. A compositionally biased stretch (low complexity) spans Gln-199–Lys-220. Basic and acidic residues predominate over residues Arg-222–His-242.

This sequence belongs to the TRAF3IP1 family.

It localises to the cell projection. The protein localises to the cilium. It is found in the flagellum. The protein resides in the cytoplasm. Its subcellular location is the cytoskeleton. It localises to the flagellum axoneme. The protein localises to the flagellum basal body. Its function is as follows. Component of the intraflagellar transport complex B (IFT-B) involved in flagellar assembly. The chain is Intraflagellar transport protein 54 from Giardia intestinalis (strain ATCC 50803 / WB clone C6) (Giardia lamblia).